A 170-amino-acid chain; its full sequence is Capsid protein (170 aa).

The segment covering Met1–Ser19 has biased composition (basic residues). The segment at Met1–Lys25 is disordered.

This sequence belongs to the nanoviridae capsid protein family.

Its subcellular location is the virion. The chain is Capsid protein (DNA-S) from Subterranean clover stunt virus (strain J) (SCSV).